Reading from the N-terminus, the 20-residue chain is Alanine aminotransferase 1 (20 aa).

Lysine 11 bears the N6-(pyridoxal phosphate)lysine mark. The N-linked (Glc) (glycation) lysine; in vitro glycan is linked to lysine 11.

It belongs to the class-I pyridoxal-phosphate-dependent aminotransferase family. Alanine aminotransferase subfamily. Homodimer. Requires pyridoxal 5'-phosphate as cofactor. Post-translationally, glycation of Lys-11 inactivates the enzyme.

The protein resides in the cytoplasm. The enzyme catalyses L-alanine + 2-oxoglutarate = pyruvate + L-glutamate. The protein operates within amino-acid degradation; L-alanine degradation via transaminase pathway; pyruvate from L-alanine: step 1/1. In terms of biological role, catalyzes the reversible transamination between alanine and 2-oxoglutarate to form pyruvate and glutamate. Participates in cellular nitrogen metabolism and also in liver gluconeogenesis starting with precursors transported from skeletal muscles. In Sus scrofa (Pig), this protein is Alanine aminotransferase 1 (GPT).